We begin with the raw amino-acid sequence, 196 residues long: Holliday junction branch migration complex subunit RuvA (196 aa).

The interval 1-61 (MYEYFEGIVT…DTGITLYGFQ (61 aa)) is domain I. Residues 62 to 140 (SEDDKGLFLK…DYVARLDRQD (79 aa)) form a domain II region. The segment at 141–149 (EEQGNISPA) is flexible linker. The segment at 149–196 (ALNDALLALIALGYTQKEVDRITTKLEEVNADTADQYIKKGLALLLKK) is domain III.

The protein belongs to the RuvA family. Homotetramer. Forms an RuvA(8)-RuvB(12)-Holliday junction (HJ) complex. HJ DNA is sandwiched between 2 RuvA tetramers; dsDNA enters through RuvA and exits via RuvB. An RuvB hexamer assembles on each DNA strand where it exits the tetramer. Each RuvB hexamer is contacted by two RuvA subunits (via domain III) on 2 adjacent RuvB subunits; this complex drives branch migration. In the full resolvosome a probable DNA-RuvA(4)-RuvB(12)-RuvC(2) complex forms which resolves the HJ.

The protein resides in the cytoplasm. The RuvA-RuvB-RuvC complex processes Holliday junction (HJ) DNA during genetic recombination and DNA repair, while the RuvA-RuvB complex plays an important role in the rescue of blocked DNA replication forks via replication fork reversal (RFR). RuvA specifically binds to HJ cruciform DNA, conferring on it an open structure. The RuvB hexamer acts as an ATP-dependent pump, pulling dsDNA into and through the RuvAB complex. HJ branch migration allows RuvC to scan DNA until it finds its consensus sequence, where it cleaves and resolves the cruciform DNA. The protein is Holliday junction branch migration complex subunit RuvA of Lactobacillus helveticus (strain DPC 4571).